The sequence spans 228 residues: Urease accessory protein UreE (228 aa).

Residues 193–228 (HGSGLHIHGIHSHGDGHSHSHDDHDHDHNHDHDHKH) form a disordered region. Residues 204–228 (SHGDGHSHSHDDHDHDHNHDHDHKH) are compositionally biased toward basic and acidic residues.

This sequence belongs to the UreE family.

The protein resides in the cytoplasm. In terms of biological role, involved in urease metallocenter assembly. Binds nickel. Probably functions as a nickel donor during metallocenter assembly. The polypeptide is Urease accessory protein UreE (Yersinia rohdei).